A 537-amino-acid chain; its full sequence is ATP synthase subunit beta (537 aa).

The segment at 1 to 61 (MAKAATSKKE…SSPQKGGKKG (61 aa)) is disordered. The segment covering 7 to 18 (SKKEASKVEAKK) has biased composition (basic and acidic residues). A compositionally biased stretch (polar residues) spans 44–55 (NSPSRTGSSSPQ). 209-216 (GGAGVGKT) serves as a coordination point for ATP.

Belongs to the ATPase alpha/beta chains family. As to quaternary structure, F-type ATPases have 2 components, CF(1) - the catalytic core - and CF(0) - the membrane proton channel. CF(1) has five subunits: alpha(3), beta(3), gamma(1), delta(1), epsilon(1). CF(0) has three main subunits: a(1), b(2) and c(9-12). The alpha and beta chains form an alternating ring which encloses part of the gamma chain. CF(1) is attached to CF(0) by a central stalk formed by the gamma and epsilon chains, while a peripheral stalk is formed by the delta and b chains.

It localises to the cell inner membrane. The catalysed reaction is ATP + H2O + 4 H(+)(in) = ADP + phosphate + 5 H(+)(out). In terms of biological role, produces ATP from ADP in the presence of a proton gradient across the membrane. The catalytic sites are hosted primarily by the beta subunits. The polypeptide is ATP synthase subunit beta (Bartonella bacilliformis (strain ATCC 35685 / KC583 / Herrer 020/F12,63)).